Reading from the N-terminus, the 681-residue chain is Long-chain-fatty-acid--CoA ligase heimdall (681 aa).

Residues 223–231 (TSGTVGMPK), 414–419 (ECYGMS), Asp-491, Arg-506, and Lys-639 each bind ATP.

This sequence belongs to the ATP-dependent AMP-binding enzyme family. Bubblegum subfamily.

It carries out the reaction a long-chain fatty acid + ATP + CoA = a long-chain fatty acyl-CoA + AMP + diphosphate. Its function is as follows. Mediates activation of long-chain fatty acids for both synthesis of cellular lipids, and degradation via beta-oxidation. Probably by regulating lipid storage and catabolism, plays a role in neuronal function. The protein is Long-chain-fatty-acid--CoA ligase heimdall of Drosophila melanogaster (Fruit fly).